A 119-amino-acid polypeptide reads, in one-letter code: Large ribosomal subunit protein bL20 (119 aa).

It belongs to the bacterial ribosomal protein bL20 family.

Functionally, binds directly to 23S ribosomal RNA and is necessary for the in vitro assembly process of the 50S ribosomal subunit. It is not involved in the protein synthesizing functions of that subunit. The polypeptide is Large ribosomal subunit protein bL20 (Dehalococcoides mccartyi (strain ATCC BAA-2100 / JCM 16839 / KCTC 5957 / BAV1)).